The following is a 745-amino-acid chain: Phosphoribosylformylglycinamidine synthase subunit PurL (745 aa).

His-41 is an active-site residue. ATP-binding residues include Tyr-44 and Lys-83. Glu-85 is a Mg(2+) binding site. Substrate-binding positions include Ser-86–His-89 and Arg-108. His-87 serves as the catalytic Proton acceptor. Position 109 (Asp-109) interacts with Mg(2+). Substrate is bound at residue Gln-232. Asp-260 is a Mg(2+) binding site. Substrate is bound at residue Glu-304–Gln-306. Positions 494 and 531 each coordinate ATP. Residue Asn-532 coordinates Mg(2+). Residue Ser-534 coordinates substrate.

Belongs to the FGAMS family. Monomer. Part of the FGAM synthase complex composed of 1 PurL, 1 PurQ and 2 PurS subunits.

The protein resides in the cytoplasm. The catalysed reaction is N(2)-formyl-N(1)-(5-phospho-beta-D-ribosyl)glycinamide + L-glutamine + ATP + H2O = 2-formamido-N(1)-(5-O-phospho-beta-D-ribosyl)acetamidine + L-glutamate + ADP + phosphate + H(+). Its pathway is purine metabolism; IMP biosynthesis via de novo pathway; 5-amino-1-(5-phospho-D-ribosyl)imidazole from N(2)-formyl-N(1)-(5-phospho-D-ribosyl)glycinamide: step 1/2. Its function is as follows. Part of the phosphoribosylformylglycinamidine synthase complex involved in the purines biosynthetic pathway. Catalyzes the ATP-dependent conversion of formylglycinamide ribonucleotide (FGAR) and glutamine to yield formylglycinamidine ribonucleotide (FGAM) and glutamate. The FGAM synthase complex is composed of three subunits. PurQ produces an ammonia molecule by converting glutamine to glutamate. PurL transfers the ammonia molecule to FGAR to form FGAM in an ATP-dependent manner. PurS interacts with PurQ and PurL and is thought to assist in the transfer of the ammonia molecule from PurQ to PurL. The chain is Phosphoribosylformylglycinamidine synthase subunit PurL from Aquifex aeolicus (strain VF5).